A 308-amino-acid chain; its full sequence is Porphobilinogen deaminase (308 aa).

Cys243 carries the post-translational modification S-(dipyrrolylmethanemethyl)cysteine.

Belongs to the HMBS family. As to quaternary structure, monomer. Dipyrromethane is required as a cofactor.

The enzyme catalyses 4 porphobilinogen + H2O = hydroxymethylbilane + 4 NH4(+). It participates in porphyrin-containing compound metabolism; protoporphyrin-IX biosynthesis; coproporphyrinogen-III from 5-aminolevulinate: step 2/4. Functionally, tetrapolymerization of the monopyrrole PBG into the hydroxymethylbilane pre-uroporphyrinogen in several discrete steps. The sequence is that of Porphobilinogen deaminase from Nitrosomonas europaea (strain ATCC 19718 / CIP 103999 / KCTC 2705 / NBRC 14298).